We begin with the raw amino-acid sequence, 331 residues long: Leucine-rich repeat-containing protein 26 (331 aa).

A signal peptide spans 1 to 26 (MRGSFFSRLPPQLSLLLLLSLRRVWT). Topologically, residues 27-261 (QEDIGTAPSK…QCTQSLAARD (235 aa)) are extracellular. The 38-residue stretch at 34 to 71 (PSKSPVAPECPEACSCSLGGKANCSALALPAVPADLSW) folds into the LRRNT domain. Intrachain disulfides connect C43–C49 and C47–C57. 5 LRR repeats span residues 72–93 (QVRSLLLDHNRVSALPPGAFAN), 96–117 (ALLYLDLRENRLRSVHARAFWG), 120–141 (VLQWLDLSSNQLETLPPGTFAP), 144–165 (ALSFLSLAGNRLALLEPSILGP), and 168–191 (LLRVLSLQDNSLSAIEAGLLNNLP). In terms of domain architecture, LRRCT spans 201–255 (NPWTCNCALRPLCTWLRKHPRPASETETLLCVSPRLQTLSLLTAFPDAAFKQCTQ). 2 disulfide bridges follow: C205/C231 and C207/C253. The helical transmembrane segment at 262–282 (LAVVYALGPVSFLASLAICLA) threads the bilayer. The Cytoplasmic portion of the chain corresponds to 283–331 (LGSVLTACGARRRRRRRTTVRHLLRRQLDPEGPPSLEDAGSPVTAAIQA). Positions 310–331 (LDPEGPPSLEDAGSPVTAAIQA) are disordered.

In terms of assembly, interacts with KCNMA1.

It localises to the cell membrane. It is found in the cytoplasm. The protein resides in the cytoskeleton. Functionally, auxiliary protein of the large-conductance, voltage and calcium-activated potassium channel (BK alpha). Required for the conversion of BK alpha channels from a high-voltage to a low-voltage activated channel type in non-excitable cells. These are characterized by negative membrane voltages and constant low levels of calcium. This chain is Leucine-rich repeat-containing protein 26 (Lrrc26), found in Mus musculus (Mouse).